We begin with the raw amino-acid sequence, 120 residues long: ATP-dependent Clp protease adapter protein ClpS (120 aa).

Belongs to the ClpS family. In terms of assembly, binds to the N-terminal domain of the chaperone ClpA.

Involved in the modulation of the specificity of the ClpAP-mediated ATP-dependent protein degradation. The chain is ATP-dependent Clp protease adapter protein ClpS from Pseudomonas syringae pv. syringae (strain B728a).